A 556-amino-acid chain; its full sequence is Adenine deaminase (556 aa).

Belongs to the metallo-dependent hydrolases superfamily. Adenine deaminase family. The cofactor is Mn(2+).

It catalyses the reaction adenine + H2O + H(+) = hypoxanthine + NH4(+). This is Adenine deaminase from Methanocaldococcus jannaschii (strain ATCC 43067 / DSM 2661 / JAL-1 / JCM 10045 / NBRC 100440) (Methanococcus jannaschii).